Consider the following 227-residue polypeptide: Cytochrome c biogenesis ATP-binding export protein CcmA (227 aa).

In terms of domain architecture, ABC transporter spans 26 to 227 (LAASGLGFSR…ARTLRLDARS (202 aa)). 58–65 (GANGSGKT) provides a ligand contact to ATP.

Belongs to the ABC transporter superfamily. CcmA exporter (TC 3.A.1.107) family. In terms of assembly, the complex is composed of two ATP-binding proteins (CcmA) and two transmembrane proteins (CcmB).

It localises to the cell inner membrane. The catalysed reaction is heme b(in) + ATP + H2O = heme b(out) + ADP + phosphate + H(+). In terms of biological role, part of the ABC transporter complex CcmAB involved in the biogenesis of c-type cytochromes; once thought to export heme, this seems not to be the case, but its exact role is uncertain. Responsible for energy coupling to the transport system. This chain is Cytochrome c biogenesis ATP-binding export protein CcmA, found in Cupriavidus necator (strain ATCC 17699 / DSM 428 / KCTC 22496 / NCIMB 10442 / H16 / Stanier 337) (Ralstonia eutropha).